We begin with the raw amino-acid sequence, 217 residues long: Adenylate kinase (217 aa).

10–15 (GAGKGT) is an ATP binding site. The tract at residues 30–59 (STGDIFRANIKNNTELGAKAKEYMDQGLLV) is NMP. Residues Thr31, Arg36, 57-59 (LLV), 85-88 (GFPR), and Gln92 each bind AMP. The interval 126-163 (GRRACVSCGGTYHVVFTPTKKEGICDACGGELTIRDDD) is LID. Residue Arg127 coordinates ATP. Residues Cys130 and Cys133 each contribute to the Zn(2+) site. Residue 136–137 (TY) participates in ATP binding. The Zn(2+) site is built by Cys150 and Cys153. Arg160 and Arg171 together coordinate AMP. Lys199 provides a ligand contact to ATP.

It belongs to the adenylate kinase family. Monomer.

It is found in the cytoplasm. The enzyme catalyses AMP + ATP = 2 ADP. Its pathway is purine metabolism; AMP biosynthesis via salvage pathway; AMP from ADP: step 1/1. Catalyzes the reversible transfer of the terminal phosphate group between ATP and AMP. Plays an important role in cellular energy homeostasis and in adenine nucleotide metabolism. The sequence is that of Adenylate kinase from Lachnoclostridium phytofermentans (strain ATCC 700394 / DSM 18823 / ISDg) (Clostridium phytofermentans).